The chain runs to 359 residues: Fructose-bisphosphate aldolase (359 aa).

Residue Ser50 coordinates D-glyceraldehyde 3-phosphate. Asp83 (proton donor) is an active-site residue. His84, Asp105, Glu142, and His198 together coordinate Zn(2+). Residue Gly199 coordinates dihydroxyacetone phosphate. His232 is a binding site for Zn(2+). Dihydroxyacetone phosphate contacts are provided by residues 233–235 (GSS) and 275–278 (NIDT).

This sequence belongs to the class II fructose-bisphosphate aldolase family. As to quaternary structure, homodimer. The cofactor is Zn(2+).

It catalyses the reaction beta-D-fructose 1,6-bisphosphate = D-glyceraldehyde 3-phosphate + dihydroxyacetone phosphate. It functions in the pathway carbohydrate biosynthesis; Calvin cycle. It participates in carbohydrate degradation; glycolysis; D-glyceraldehyde 3-phosphate and glycerone phosphate from D-glucose: step 4/4. In terms of biological role, catalyzes the aldol condensation of dihydroxyacetone phosphate (DHAP or glycerone-phosphate) with glyceraldehyde 3-phosphate (G3P) to form fructose 1,6-bisphosphate (FBP) in gluconeogenesis and the reverse reaction in glycolysis. This Rhizobium meliloti (strain 1021) (Ensifer meliloti) protein is Fructose-bisphosphate aldolase (cbbA).